Reading from the N-terminus, the 38-residue chain is Photosystem II reaction center protein X (38 aa).

The chain crosses the membrane as a helical span at residues 9 to 29 (IASLTAGALVLSAIGIALIII).

This sequence belongs to the PsbX family. Type 1 subfamily. In terms of assembly, PSII is composed of 1 copy each of membrane proteins PsbA, PsbB, PsbC, PsbD, PsbE, PsbF, PsbH, PsbI, PsbJ, PsbK, PsbL, PsbM, PsbT, PsbX, PsbY, PsbZ, Psb30/Ycf12, at least 3 peripheral proteins of the oxygen-evolving complex and a large number of cofactors. It forms dimeric complexes.

The protein localises to the plastid. It is found in the chloroplast thylakoid membrane. In terms of biological role, involved in the binding and/or turnover of quinones at the Q(B) site of photosystem II (PSII). PSII is a light-driven water plastoquinone oxidoreductase, using light energy to abstract electrons from H(2)O, generating a proton gradient subsequently used for ATP formation. The protein is Photosystem II reaction center protein X of Thalassiosira pseudonana (Marine diatom).